Reading from the N-terminus, the 632-residue chain is Chaperone protein HtpG (632 aa).

Residues 1–339 form an a; substrate-binding region; sequence MAHETMSFQA…SADLPLNVSR (339 aa). The tract at residues 340–559 is b; it reads EILQESRDVK…DNDMSGYLQR (220 aa). Positions 560 to 632 are c; that stretch reads MLKAAGQNAP…TNALLLSRAA (73 aa).

This sequence belongs to the heat shock protein 90 family. Homodimer.

It is found in the cytoplasm. Functionally, molecular chaperone. Has ATPase activity. The sequence is that of Chaperone protein HtpG from Burkholderia ambifaria (strain ATCC BAA-244 / DSM 16087 / CCUG 44356 / LMG 19182 / AMMD) (Burkholderia cepacia (strain AMMD)).